A 416-amino-acid chain; its full sequence is E3 ubiquitin-protein ligase DMA1 (416 aa).

A disordered region spans residues 1–30 (MSTNTVPSSPPNQTPPAASGIATSHDHTKF). Glycyl lysine isopeptide (Lys-Gly) (interchain with G-Cter in ubiquitin) cross-links involve residues lysine 150, lysine 204, lysine 217, lysine 237, lysine 240, lysine 260, lysine 300, lysine 306, lysine 313, and lysine 317. The 64-residue stretch at 189–252 (IIIGRYTERV…SGTFLNHQRL (64 aa)) folds into the FHA domain. The RING-type zinc finger occupies 327–371 (CSICLNKIKPCQAIFISPCAHSWHFHCVRRLVIMNYPQFMCPNCR).

It belongs to the DMA1 family. In terms of assembly, interacts with CDC123. Interacts with PCL1. UBC4-dependent autoubiquitination occurs at Lys-150, Lys-204, Lys-217, Lys-237, Lys-240, Lys-260, Lys-300, Lys-306, Lys-313 and Lys-317. UBC4-dependent autoubiquitination is responsible for DMA2 turnover. UBC13/MMS2-dependent autoubiquitination occurs at Lys-237 and Lys-306. Lys-204 and Lys-306 are also ubiquitinated in trans by DMA2 E3 ligase in association with UBC4.

It is found in the cytoplasm. The catalysed reaction is S-ubiquitinyl-[E2 ubiquitin-conjugating enzyme]-L-cysteine + [acceptor protein]-L-lysine = [E2 ubiquitin-conjugating enzyme]-L-cysteine + N(6)-ubiquitinyl-[acceptor protein]-L-lysine.. Functionally, E3 ubiquitin-protein ligase which functions in cell cycle retarding in conjunction with the UBC4 and UBC13/MMS2 complex, 2 E2 ubiquitin conjugating enzymes. Involved in nutritional control of the cell cycle. Targets the G1 cyclin PCL1 for destruction. Required for proper spindle positioning, likely regulating septin ring deposition at the bud neck. This is E3 ubiquitin-protein ligase DMA1 from Saccharomyces cerevisiae (strain ATCC 204508 / S288c) (Baker's yeast).